Reading from the N-terminus, the 405-residue chain is Na(+)/H(+) antiporter NhaA 1 (405 aa).

11 consecutive transmembrane segments (helical) span residues 20–40 (FVSD…AMIV), 68–88 (LHLW…GLEV), 105–125 (LPVL…VGVV), 134–154 (GWAI…GLLG), 163–183 (LFLL…IAAF), 186–206 (ANLK…MVGM), 214–234 (IWPY…SGVH), 263–283 (GLAP…NAGV), 301–321 (IAAG…VAAV), 334–354 (WIEI…SLFI), and 371–391 (IGIL…LRLT).

Belongs to the NhaA Na(+)/H(+) (TC 2.A.33) antiporter family.

It is found in the cell inner membrane. It catalyses the reaction Na(+)(in) + 2 H(+)(out) = Na(+)(out) + 2 H(+)(in). Functionally, na(+)/H(+) antiporter that extrudes sodium in exchange for external protons. The sequence is that of Na(+)/H(+) antiporter NhaA 1 from Erythrobacter litoralis (strain HTCC2594).